The sequence spans 230 residues: Ion-translocating oxidoreductase complex subunit E (230 aa).

The next 6 helical transmembrane spans lie at Ala-18 to Ala-38, Leu-39 to Leu-59, Thr-63 to Val-83, Leu-86 to Val-106, Ala-125 to Leu-145, and Pro-182 to Val-202.

The protein belongs to the NqrDE/RnfAE family. As to quaternary structure, the complex is composed of six subunits: RnfA, RnfB, RnfC, RnfD, RnfE and RnfG.

It localises to the cell inner membrane. Functionally, part of a membrane-bound complex that couples electron transfer with translocation of ions across the membrane. This Citrobacter koseri (strain ATCC BAA-895 / CDC 4225-83 / SGSC4696) protein is Ion-translocating oxidoreductase complex subunit E.